We begin with the raw amino-acid sequence, 500 residues long: Vitamin D(3) 25-hydroxylase (500 aa).

Residue C446 participates in heme binding.

The protein belongs to the cytochrome P450 family. The cofactor is heme. As to expression, found in liver and kidney.

Its subcellular location is the endoplasmic reticulum membrane. It is found in the microsome membrane. The catalysed reaction is calciol + reduced [NADPH--hemoprotein reductase] + O2 = calcidiol + oxidized [NADPH--hemoprotein reductase] + H2O + H(+). It carries out the reaction alfacalcidol + reduced [NADPH--hemoprotein reductase] + O2 = calcitriol + oxidized [NADPH--hemoprotein reductase] + H2O + H(+). The enzyme catalyses dodecanoate + reduced [NADPH--hemoprotein reductase] + O2 = 12-hydroxydodecanoate + oxidized [NADPH--hemoprotein reductase] + H2O + H(+). It catalyses the reaction dodecanoate + reduced [NADPH--hemoprotein reductase] + O2 = 11-hydroxydodecanoate + oxidized [NADPH--hemoprotein reductase] + H2O + H(+). The catalysed reaction is 5beta-cholestane-3alpha,7alpha-diol + reduced [NADPH--hemoprotein reductase] + O2 = 5beta-cholestane-3alpha,7alpha,25-triol + oxidized [NADPH--hemoprotein reductase] + H2O + H(+). It carries out the reaction 5beta-cholestane-3alpha,7alpha,12alpha-triol + reduced [NADPH--hemoprotein reductase] + O2 = 5beta-cholestane-3alpha,7alpha,12alpha,25-tetrol + oxidized [NADPH--hemoprotein reductase] + H2O + H(+). Catalyzes the 25-hydroxylation of vitamin D(3) (calciol), 1alpha-hydroxyvitamin D(3) (alphacalcidiol) and some C27 steroids. In addition the enzyme catalyzes the hydroxylation of positions 11 and 12 of dodecanoate. The protein is Vitamin D(3) 25-hydroxylase (CYP2D25) of Sus scrofa (Pig).